We begin with the raw amino-acid sequence, 405 residues long: L-carnitine CoA-transferase (405 aa).

Positions 97 and 104 each coordinate CoA. The active-site Nucleophile is D169.

Belongs to the CoA-transferase III family. CaiB subfamily. In terms of assembly, homodimer.

The protein localises to the cytoplasm. The catalysed reaction is crotonobetainyl-CoA + (R)-carnitine = crotonobetaine + (R)-carnitinyl-CoA. It catalyses the reaction 4-(trimethylamino)butanoyl-CoA + (R)-carnitine = (R)-carnitinyl-CoA + 4-(trimethylamino)butanoate. It participates in amine and polyamine metabolism; carnitine metabolism. Its function is as follows. Catalyzes the reversible transfer of the CoA moiety from gamma-butyrobetainyl-CoA to L-carnitine to generate L-carnitinyl-CoA and gamma-butyrobetaine. Is also able to catalyze the reversible transfer of the CoA moiety from gamma-butyrobetainyl-CoA or L-carnitinyl-CoA to crotonobetaine to generate crotonobetainyl-CoA. The sequence is that of L-carnitine CoA-transferase from Escherichia coli (strain SE11).